A 642-amino-acid polypeptide reads, in one-letter code: 1-deoxy-D-xylulose-5-phosphate synthase (642 aa).

Thiamine diphosphate is bound by residues histidine 79 and 120–122 (GHS). Position 151 (aspartate 151) interacts with Mg(2+). Residues 152-153 (GS), asparagine 180, tyrosine 290, and glutamate 372 each bind thiamine diphosphate. Mg(2+) is bound at residue asparagine 180.

Belongs to the transketolase family. DXPS subfamily. In terms of assembly, homodimer. It depends on Mg(2+) as a cofactor. Thiamine diphosphate serves as cofactor.

It catalyses the reaction D-glyceraldehyde 3-phosphate + pyruvate + H(+) = 1-deoxy-D-xylulose 5-phosphate + CO2. Its pathway is metabolic intermediate biosynthesis; 1-deoxy-D-xylulose 5-phosphate biosynthesis; 1-deoxy-D-xylulose 5-phosphate from D-glyceraldehyde 3-phosphate and pyruvate: step 1/1. Functionally, catalyzes the acyloin condensation reaction between C atoms 2 and 3 of pyruvate and glyceraldehyde 3-phosphate to yield 1-deoxy-D-xylulose-5-phosphate (DXP). In Rhodospirillum centenum (strain ATCC 51521 / SW), this protein is 1-deoxy-D-xylulose-5-phosphate synthase.